The chain runs to 103 residues: Eukaryotic translation initiation factor 4E-1A-binding protein homolog (103 aa).

The segment at 49 to 103 (NSPLSKTPPPQLAHITNTELNKKVEKSTTTPTTTTPPTTTAKPKPTNDDDIFPME) is disordered. Residues 76-92 (TTTPTTTTPPTTTAKPK) are compositionally biased toward low complexity.

It belongs to the eIF4E-binding protein family.

Regulates assembly of the eIF4F complex. The polypeptide is Eukaryotic translation initiation factor 4E-1A-binding protein homolog (febA) (Dictyostelium discoideum (Social amoeba)).